A 443-amino-acid chain; its full sequence is Chromosomal replication initiator protein DnaA (443 aa).

The segment at 1–75 is domain I, interacts with DnaA modulators; it reads MNTQLNEIWQ…AIKQVTFKEY (75 aa). Residues 75–105 form a domain II region; the sequence is YEIAFIVPSQENLNKLTKQTESAGNEDSPLS. The domain III, AAA+ region stretch occupies residues 106 to 321; it reads VLNPKYTFDT…GALNRVIAYS (216 aa). 4 residues coordinate ATP: glycine 150, glycine 152, lysine 153, and threonine 154. Positions 322–443 are domain IV, binds dsDNA; sequence SLTENEITVE…SEIKRNLLGK (122 aa).

It belongs to the DnaA family. In terms of assembly, oligomerizes as a right-handed, spiral filament on DNA at oriC.

Its subcellular location is the cytoplasm. Plays an essential role in the initiation and regulation of chromosomal replication. ATP-DnaA binds to the origin of replication (oriC) to initiate formation of the DNA replication initiation complex once per cell cycle. Binds the DnaA box (a 9 base pair repeat at the origin) and separates the double-stranded (ds)DNA. Forms a right-handed helical filament on oriC DNA; dsDNA binds to the exterior of the filament while single-stranded (ss)DNA is stabiized in the filament's interior. The ATP-DnaA-oriC complex binds and stabilizes one strand of the AT-rich DNA unwinding element (DUE), permitting loading of DNA polymerase. After initiation quickly degrades to an ADP-DnaA complex that is not apt for DNA replication. Binds acidic phospholipids. This is Chromosomal replication initiator protein DnaA from Acetivibrio thermocellus (strain ATCC 27405 / DSM 1237 / JCM 9322 / NBRC 103400 / NCIMB 10682 / NRRL B-4536 / VPI 7372) (Clostridium thermocellum).